A 309-amino-acid polypeptide reads, in one-letter code: Aspartate carbamoyltransferase catalytic subunit (309 aa).

Carbamoyl phosphate is bound by residues Arg57 and Thr58. Lys86 serves as a coordination point for L-aspartate. Arg107, His135, and Gln138 together coordinate carbamoyl phosphate. Positions 168 and 228 each coordinate L-aspartate. Carbamoyl phosphate-binding residues include Leu267 and Pro268.

The protein belongs to the aspartate/ornithine carbamoyltransferase superfamily. ATCase family. As to quaternary structure, heterooligomer of catalytic and regulatory chains.

The enzyme catalyses carbamoyl phosphate + L-aspartate = N-carbamoyl-L-aspartate + phosphate + H(+). The protein operates within pyrimidine metabolism; UMP biosynthesis via de novo pathway; (S)-dihydroorotate from bicarbonate: step 2/3. In terms of biological role, catalyzes the condensation of carbamoyl phosphate and aspartate to form carbamoyl aspartate and inorganic phosphate, the committed step in the de novo pyrimidine nucleotide biosynthesis pathway. The polypeptide is Aspartate carbamoyltransferase catalytic subunit (Nitrosopumilus maritimus (strain SCM1)).